The chain runs to 263 residues: Tryptophan synthase alpha chain (263 aa).

Active-site proton acceptor residues include Glu-47 and Asp-58.

It belongs to the TrpA family. Tetramer of two alpha and two beta chains.

The protein resides in the plastid. The protein localises to the chloroplast. It carries out the reaction (1S,2R)-1-C-(indol-3-yl)glycerol 3-phosphate + L-serine = D-glyceraldehyde 3-phosphate + L-tryptophan + H2O. Its pathway is amino-acid biosynthesis; L-tryptophan biosynthesis; L-tryptophan from chorismate: step 5/5. Functionally, the alpha subunit is responsible for the aldol cleavage of indoleglycerol phosphate to indole and glyceraldehyde 3-phosphate. The chain is Tryptophan synthase alpha chain from Antithamnion sp. (Red alga).